A 755-amino-acid chain; its full sequence is Sentrin-specific protease 5 (755 aa).

The interval 268-321 is disordered; that stretch reads VQKVTGDHQETRRENGEGGSCSPFPSPEPKDPSCRHQPYFPDMDSSAVVKGTNS. Positions 272 to 283 are enriched in basic and acidic residues; sequence TGDHQETRRENG. Residues 567–724 form a protease region; sequence HMLDMDDLAT…VFVLQYCKCL (158 aa). Active-site residues include H646, D663, and C713.

The protein belongs to the peptidase C48 family. Interacts with CCAR2.

Its subcellular location is the nucleus. The protein resides in the nucleolus. Functionally, protease that catalyzes two essential functions in the SUMO pathway: processing of full-length SUMO3 to its mature form and deconjugation of SUMO2 and SUMO3 from targeted proteins. Has weak proteolytic activity against full-length SUMO1 or SUMO1 conjugates. Required for cell division. In Homo sapiens (Human), this protein is Sentrin-specific protease 5 (SENP5).